The sequence spans 262 residues: MKITVNTLHKLAEEGRKITMLTCYDASFASLLDEAGVEILLVGDSLGPVMQGVDSTLPVSEEDMLYHIRCVARGAKNALILGDMTFGAYQESPQQAFAHAARLLQAGAHMVKLEGGAYMAETTRFLVERGIPVCSHIGLTPQYVNMFGGYRVQGRGEDAQRILNDAKVLAEAGASLVLMECVPAPLAKEITETVKAPTIGIGAGADTSGQVLVLHDMLGVYPGKKAKFVKNFMEEAGSIQGAVQAYIKAVKDKTFPAEEHTY.

2 residues coordinate Mg(2+): Asp44 and Asp83. Residues 44-45 (DS), Asp83, and Lys112 contribute to the 3-methyl-2-oxobutanoate site. Glu114 is a Mg(2+) binding site. Glu180 (proton acceptor) is an active-site residue.

This sequence belongs to the PanB family. As to quaternary structure, homodecamer; pentamer of dimers. It depends on Mg(2+) as a cofactor.

Its subcellular location is the cytoplasm. The enzyme catalyses 3-methyl-2-oxobutanoate + (6R)-5,10-methylene-5,6,7,8-tetrahydrofolate + H2O = 2-dehydropantoate + (6S)-5,6,7,8-tetrahydrofolate. Its pathway is cofactor biosynthesis; (R)-pantothenate biosynthesis; (R)-pantoate from 3-methyl-2-oxobutanoate: step 1/2. Its function is as follows. Catalyzes the reversible reaction in which hydroxymethyl group from 5,10-methylenetetrahydrofolate is transferred onto alpha-ketoisovalerate to form ketopantoate. The polypeptide is 3-methyl-2-oxobutanoate hydroxymethyltransferase (Chromobacterium violaceum (strain ATCC 12472 / DSM 30191 / JCM 1249 / CCUG 213 / NBRC 12614 / NCIMB 9131 / NCTC 9757 / MK)).